Here is a 1303-residue protein sequence, read N- to C-terminus: Alpha,alpha-trehalose-phosphate synthase [UDP-forming] 2 (1303 aa).

2 disordered regions span residues 1–48 and 205–251; these read MTVV…NNTT and LQRR…FRGK. Positions 212–221 are enriched in low complexity; the sequence is SSRGGSLRGS.

In the N-terminal section; belongs to the glycosyltransferase 20 family. The protein in the C-terminal section; belongs to the gob-1 trehalose phosphatase family.

It catalyses the reaction D-glucose 6-phosphate + UDP-alpha-D-glucose = alpha,alpha-trehalose 6-phosphate + UDP + H(+). Catalyzes the production of trehalose from glucose-6-phosphate and UDP-alpha-D-glucose in a 2 step process. This chain is Alpha,alpha-trehalose-phosphate synthase [UDP-forming] 2 (tps-2), found in Aphelenchoides avenae (Mycophagous nematode worm).